Reading from the N-terminus, the 403-residue chain is S-adenosylmethionine synthase (403 aa).

ATP is bound at residue His14. Asp16 is a binding site for Mg(2+). Glu42 provides a ligand contact to K(+). Glu55 and Gln99 together coordinate L-methionine. The interval 99–109 is flexible loop; sequence QSPEIAEGVDH. ATP contacts are provided by residues 180 to 182, 250 to 251, Asp259, 265 to 266, Ala282, and Lys286; these read DAK, RF, and RK. Position 259 (Asp259) interacts with L-methionine. Lys290 is a binding site for L-methionine.

It belongs to the AdoMet synthase family. Homotetramer; dimer of dimers. Mg(2+) serves as cofactor. Requires K(+) as cofactor.

It is found in the cytoplasm. The catalysed reaction is L-methionine + ATP + H2O = S-adenosyl-L-methionine + phosphate + diphosphate. The protein operates within amino-acid biosynthesis; S-adenosyl-L-methionine biosynthesis; S-adenosyl-L-methionine from L-methionine: step 1/1. Functionally, catalyzes the formation of S-adenosylmethionine (AdoMet) from methionine and ATP. The overall synthetic reaction is composed of two sequential steps, AdoMet formation and the subsequent tripolyphosphate hydrolysis which occurs prior to release of AdoMet from the enzyme. In Deinococcus deserti (strain DSM 17065 / CIP 109153 / LMG 22923 / VCD115), this protein is S-adenosylmethionine synthase.